A 325-amino-acid chain; its full sequence is Protein FAM50B (325 aa).

Alanine 2 bears the N-acetylalanine mark. The disordered stretch occupies residues 137–160 (RRAGNLGKNPDVDTSFLPDRDREE).

This sequence belongs to the FAM50 family.

The polypeptide is Protein FAM50B (FAM50B) (Macaca fascicularis (Crab-eating macaque)).